The sequence spans 127 residues: Trefoil factor 2 (127 aa).

Positions 1-21 (EPQRPAPGHPPPAGAVCLTGA) are cleaved as a signal peptide. Glutamine 22 carries the post-translational modification Pyrrolidone carboxylic acid. 2 P-type domains span residues 27-71 (CRCS…FKPL) and 77-120 (EECV…FFPM). Intrachain disulfides connect cysteine 27–cysteine 125, cysteine 29–cysteine 56, cysteine 40–cysteine 55, cysteine 50–cysteine 67, cysteine 79–cysteine 105, cysteine 89–cysteine 104, and cysteine 99–cysteine 116.

As to expression, found in pancreas.

It localises to the secreted. Inhibits gastrointestinal motility and gastric acid secretion. Could function as a structural component of gastric mucus, possibly by stabilizing glycoproteins in the mucus gel through interactions with carbohydrate side chains. The polypeptide is Trefoil factor 2 (TFF2) (Sus scrofa (Pig)).